A 445-amino-acid polypeptide reads, in one-letter code: Phosphoglucosamine mutase (445 aa).

Residue Ser-102 is the Phosphoserine intermediate of the active site. Positions 102, 240, 242, and 244 each coordinate Mg(2+). Ser-102 is modified (phosphoserine).

The protein belongs to the phosphohexose mutase family. It depends on Mg(2+) as a cofactor. Activated by phosphorylation.

The enzyme catalyses alpha-D-glucosamine 1-phosphate = D-glucosamine 6-phosphate. In terms of biological role, catalyzes the conversion of glucosamine-6-phosphate to glucosamine-1-phosphate. The protein is Phosphoglucosamine mutase of Mycobacterium marinum (strain ATCC BAA-535 / M).